A 416-amino-acid chain; its full sequence is Geranyl diphosphate synthase (416 aa).

Residues Asp157 and Asp161 each contribute to the Mg(2+) site. Residues 157 to 161 (DDIMD) carry the DDXXD motif motif.

The protein belongs to the FPP/GGPP synthase family. The cofactor is Mg(2+). As to expression, specifically expressed in the anterior midgut of male beetles, the site of aggregation pheromone biosynthesis.

The enzyme catalyses isopentenyl diphosphate + dimethylallyl diphosphate = (2E)-geranyl diphosphate + diphosphate. Its pathway is pheromone biosynthesis. In terms of biological role, geranyl diphosphate synthase involved in pheromone biosynthesis. In Ips pini (Pine engraver beetle), this protein is Geranyl diphosphate synthase.